The chain runs to 313 residues: Homoserine O-succinyltransferase (313 aa).

C142 (acyl-thioester intermediate) is an active-site residue. Residues K163 and S192 each coordinate substrate. The Proton acceptor role is filled by H235. E237 is a catalytic residue. R249 lines the substrate pocket.

Belongs to the MetA family.

It is found in the cytoplasm. It catalyses the reaction L-homoserine + succinyl-CoA = O-succinyl-L-homoserine + CoA. It functions in the pathway amino-acid biosynthesis; L-methionine biosynthesis via de novo pathway; O-succinyl-L-homoserine from L-homoserine: step 1/1. Its function is as follows. Transfers a succinyl group from succinyl-CoA to L-homoserine, forming succinyl-L-homoserine. This chain is Homoserine O-succinyltransferase, found in Shewanella sp. (strain ANA-3).